A 256-amino-acid chain; its full sequence is Thiazole synthase (256 aa).

The active-site Schiff-base intermediate with DXP is the Lys95. Residues Gly156, 182–183 (AG), and 204–205 (NT) contribute to the 1-deoxy-D-xylulose 5-phosphate site.

Belongs to the ThiG family. As to quaternary structure, homotetramer. Forms heterodimers with either ThiH or ThiS.

Its subcellular location is the cytoplasm. The catalysed reaction is [ThiS sulfur-carrier protein]-C-terminal-Gly-aminoethanethioate + 2-iminoacetate + 1-deoxy-D-xylulose 5-phosphate = [ThiS sulfur-carrier protein]-C-terminal Gly-Gly + 2-[(2R,5Z)-2-carboxy-4-methylthiazol-5(2H)-ylidene]ethyl phosphate + 2 H2O + H(+). It participates in cofactor biosynthesis; thiamine diphosphate biosynthesis. Functionally, catalyzes the rearrangement of 1-deoxy-D-xylulose 5-phosphate (DXP) to produce the thiazole phosphate moiety of thiamine. Sulfur is provided by the thiocarboxylate moiety of the carrier protein ThiS. In vitro, sulfur can be provided by H(2)S. This Alteromonas mediterranea (strain DSM 17117 / CIP 110805 / LMG 28347 / Deep ecotype) protein is Thiazole synthase.